Here is a 150-residue protein sequence, read N- to C-terminus: Deoxyuridine 5'-triphosphate nucleotidohydrolase (150 aa).

Substrate-binding positions include 69–71 (RSG), asparagine 82, and 86–88 (LID).

Belongs to the dUTPase family. Requires Mg(2+) as cofactor.

It catalyses the reaction dUTP + H2O = dUMP + diphosphate + H(+). The protein operates within pyrimidine metabolism; dUMP biosynthesis; dUMP from dCTP (dUTP route): step 2/2. Functionally, this enzyme is involved in nucleotide metabolism: it produces dUMP, the immediate precursor of thymidine nucleotides and it decreases the intracellular concentration of dUTP so that uracil cannot be incorporated into DNA. The protein is Deoxyuridine 5'-triphosphate nucleotidohydrolase of Methylobacillus flagellatus (strain ATCC 51484 / DSM 6875 / VKM B-1610 / KT).